Consider the following 457-residue polypeptide: Mesentericin Y105 secretion protein MesE (457 aa).

Residues Thr-22–Ala-42 form a helical membrane-spanning segment.

The protein belongs to the membrane fusion protein (MFP) (TC 8.A.1) family.

The protein localises to the membrane. Involved in the secretion of mesentericin Y105. The sequence is that of Mesentericin Y105 secretion protein MesE (mesE) from Leuconostoc mesenteroides.